Reading from the N-terminus, the 682-residue chain is E3 ubiquitin-protein ligase RNF103 (682 aa).

Helical transmembrane passes span 6–26 (FFLL…EAIV), 326–346 (LFVL…FITQ), 366–386 (LLII…LDSF), and 411–431 (MFYS…GLLI). Residues 525-542 (EEMSESSQDTENDSDSDN) are compositionally biased toward acidic residues. The tract at residues 525–549 (EEMSESSQDTENDSDSDNTDTFSSS) is disordered. Residues 618–660 (CVVCLENFENGCLLMGLPCGHVFHQNCIVMWLAGGRHCCPVCR) form an RING-type zinc finger.

In terms of assembly, interacts with DERL1 and VCP. Expressed in different tissues including hippocampus, cerebral cortex, heart, kidney, spleen and lung. Expression is increased in hippocampus and frontal cortex after chronic treatment with antidepressants.

Its subcellular location is the endoplasmic reticulum membrane. It catalyses the reaction S-ubiquitinyl-[E2 ubiquitin-conjugating enzyme]-L-cysteine + [acceptor protein]-L-lysine = [E2 ubiquitin-conjugating enzyme]-L-cysteine + N(6)-ubiquitinyl-[acceptor protein]-L-lysine.. It participates in protein modification; protein ubiquitination. In terms of biological role, acts as an E2-dependent E3 ubiquitin-protein ligase, probably involved in the ER-associated protein degradation pathway. This chain is E3 ubiquitin-protein ligase RNF103 (Rnf103), found in Rattus norvegicus (Rat).